The chain runs to 391 residues: MAIINMSELDLQGKRVLIREDLNVPVSDGVVTSDARLRAALPTIKLALEKGAAVMVMSHLGRPTEGEFNAEFSLQPVVNYLTKALECPVRLANDYLDGVEANVGELVVFENVRFNVGEKKNDEALAKKLAALCDVYVMDAFGTAHRAQASTHGVGLHAPVACAGPLLAGELEALGKAMDNPARPLVAIVGGSKVSTKLTVLESLSGIVDQLVVGGGIANTFIAAAGHEVGKSLYEANLIEEAKRLVANAQSRGGDIPVPTDVVVAGEFSPTASATLKDVSEVTSDDMIFDIGPDSAEALSEILKNAGTIVWNGPVGVFEFDQFGEGTKRIAQAIAESDAFSIAGGGDTLAAVDKYDIADKVSYISTGGGAFLEFLEGKELPAVAMLESRGE.

Substrate-binding positions include 21–23 (DLN), arginine 36, 59–62 (HLGR), arginine 113, and arginine 146. ATP-binding positions include lysine 197, glutamate 319, and 345 to 348 (GGDT).

This sequence belongs to the phosphoglycerate kinase family. As to quaternary structure, monomer.

It localises to the cytoplasm. The enzyme catalyses (2R)-3-phosphoglycerate + ATP = (2R)-3-phospho-glyceroyl phosphate + ADP. It participates in carbohydrate degradation; glycolysis; pyruvate from D-glyceraldehyde 3-phosphate: step 2/5. The polypeptide is Phosphoglycerate kinase (Shewanella sediminis (strain HAW-EB3)).